Consider the following 238-residue polypeptide: MSEVTTAEFNEEGKYLRKIRSFVLREGRLTKGQAQAIESQWPTMGLDYSPVPLNLSEVFGREADTVLEIGFGMGASLVQMAKDAPEQNFIGIEVHKPGVGSCLSDAAIAGVTNLRVYHHDAMEVLEHAIADGSLARVQLFFPDPWHKKRHHKRRIVQAEFAELVRRKLKIGGVFHMATDWEEYSEHMLEVMNAAPGYKNQSADGTVVPRPDHRPLTKFEARGHRLGHGVWDLMFERIA.

S-adenosyl-L-methionine is bound by residues Glu68, Glu93, Asp120, and Asp143. Asp143 is an active-site residue. Residues Lys147, Asp179, and 216-219 (TKFE) each bind substrate.

The protein belongs to the class I-like SAM-binding methyltransferase superfamily. TrmB family.

The enzyme catalyses guanosine(46) in tRNA + S-adenosyl-L-methionine = N(7)-methylguanosine(46) in tRNA + S-adenosyl-L-homocysteine. It functions in the pathway tRNA modification; N(7)-methylguanine-tRNA biosynthesis. Functionally, catalyzes the formation of N(7)-methylguanine at position 46 (m7G46) in tRNA. In Shewanella putrefaciens (strain CN-32 / ATCC BAA-453), this protein is tRNA (guanine-N(7)-)-methyltransferase.